Reading from the N-terminus, the 309-residue chain is General transcription factor IIH subunit 3 (309 aa).

The C4-type zinc finger occupies 269 to 286; that stretch reads CSVCLSIFCNFSPICTTC.

The protein belongs to the TFB4 family. As to quaternary structure, part of a TFIID-containing RNA polymerase II pre-initiation complex that is composed of TBP and at least GTF2A1, GTF2A2, GTF2E1, GTF2E2, GTF2F1, GTF2H2, GTF2H3, GTF2H4, GTF2H5, GTF2B, TCEA1, ERCC2, ERCC3, TAF1, TAF2, TAF3, TAF4, TAF5, TAF6, TAF7, TAF8, TAF9, TAF10, TAF11, TAF12 and TAF13. Component of the 7-subunit TFIIH core complex composed of XPB/ERCC3, XPD/ERCC2, GTF2H1, GTF2H2, GTF2H3, GTF2H4 and GTF2H5, which is active in NER. The core complex associates with the 3-subunit CDK-activating kinase (CAK) module composed of CCNH/cyclin H, CDK7 and MNAT1 to form the 10-subunit holoenzyme (holo-TFIIH) active in transcription. Interacts with RARA; the interaction requires prior phosphorylation of RARA on 'Ser-369' which then enhances interaction of RARA with CDK7.

It is found in the nucleus. In terms of biological role, component of the general transcription and DNA repair factor IIH (TFIIH) core complex, which is involved in general and transcription-coupled nucleotide excision repair (NER) of damaged DNA and, when complexed to CAK, in RNA transcription by RNA polymerase II. In NER, TFIIH acts by opening DNA around the lesion to allow the excision of the damaged oligonucleotide and its replacement by a new DNA fragment. In transcription, TFIIH has an essential role in transcription initiation. When the pre-initiation complex (PIC) has been established, TFIIH is required for promoter opening and promoter escape. Phosphorylation of the C-terminal tail (CTD) of the largest subunit of RNA polymerase II by the kinase module CAK controls the initiation of transcription. The polypeptide is General transcription factor IIH subunit 3 (GTF2H3) (Bos taurus (Bovine)).